Consider the following 423-residue polypeptide: MTEPALSSANNALMQKLTGRQLFDKIGRPTRIVAPMVDQSELAWRILSRRYGATLAYTPMLHAKLFATSKKYREDNWSSLDGSSVDRPLVVQFCANDPEYLLAAAKLVEDKCDAVDLNLGCPQGIAKKGHYGSFLMEEWDLIHNLINTLHKNLKVPVTAKIRIFDDCEKSLNYAKMVLDAGAQFLTVHGRVREQKGQKTGLANWETIKYLRDNLPKETVFFANGNILYPEDISRCMEHIGADAVMSAEGNLYNPGVFNVGQTKNKEKIFPRVDKIIREYFQIVKECQESKASKTAMKSHFFKILRPFLPHHTDIRSTLATMNAKATWEEWEEQVVKPVEKVVQEIFEQPDIAIKDEITIGEKQSWGGSYRTVPYWRCQPYFRPVNGITGDKRVMQGLIDESVNKKRKADVPLESADKKKDVKA.

T2 is modified (N-acetylthreonine). FMN-binding positions include 35-37 (PMV) and Q92. C121 acts as the Proton donor in catalysis. FMN is bound by residues K160, H188, 223–225 (NGN), and 247–248 (AE). Positions 404-423 (KKRKADVPLESADKKKDVKA) are disordered. A compositionally biased stretch (basic and acidic residues) spans 408–423 (ADVPLESADKKKDVKA).

Belongs to the Dus family. Dus1 subfamily. As to quaternary structure, monomer. It depends on FMN as a cofactor.

The catalysed reaction is 5,6-dihydrouridine(16) in tRNA + NADP(+) = uridine(16) in tRNA + NADPH + H(+). The enzyme catalyses 5,6-dihydrouridine(16) in tRNA + NAD(+) = uridine(16) in tRNA + NADH + H(+). It catalyses the reaction 5,6-dihydrouridine(17) in tRNA + NAD(+) = uridine(17) in tRNA + NADH + H(+). It carries out the reaction 5,6-dihydrouridine(17) in tRNA + NADP(+) = uridine(17) in tRNA + NADPH + H(+). The catalysed reaction is a 5,6-dihydrouridine in mRNA + NAD(+) = a uridine in mRNA + NADH + H(+). The enzyme catalyses a 5,6-dihydrouridine in mRNA + NADP(+) = a uridine in mRNA + NADPH + H(+). Functionally, catalyzes the synthesis of dihydrouridine, a modified base found in the D-loop of most tRNAs. Specifically modifies U16 and U17 in cytoplasmic tRNAs. Also able to mediate dihydrouridylation of some mRNAs, thereby affecting their translation. This Saccharomyces cerevisiae (strain ATCC 204508 / S288c) (Baker's yeast) protein is tRNA-dihydrouridine(16/17) synthase [NAD(P)(+)].